The primary structure comprises 217 residues: Phosphoribosylformylglycinamidine synthase subunit PurQ (217 aa).

The Glutamine amidotransferase type-1 domain maps to 2-217; sequence NIGIIVFPGS…GKSILSTLLS (216 aa). The Nucleophile role is filled by C86. Active-site residues include H194 and E196.

As to quaternary structure, part of the FGAM synthase complex composed of 1 PurL, 1 PurQ and 2 PurS subunits.

It is found in the cytoplasm. It carries out the reaction N(2)-formyl-N(1)-(5-phospho-beta-D-ribosyl)glycinamide + L-glutamine + ATP + H2O = 2-formamido-N(1)-(5-O-phospho-beta-D-ribosyl)acetamidine + L-glutamate + ADP + phosphate + H(+). It catalyses the reaction L-glutamine + H2O = L-glutamate + NH4(+). The protein operates within purine metabolism; IMP biosynthesis via de novo pathway; 5-amino-1-(5-phospho-D-ribosyl)imidazole from N(2)-formyl-N(1)-(5-phospho-D-ribosyl)glycinamide: step 1/2. Functionally, part of the phosphoribosylformylglycinamidine synthase complex involved in the purines biosynthetic pathway. Catalyzes the ATP-dependent conversion of formylglycinamide ribonucleotide (FGAR) and glutamine to yield formylglycinamidine ribonucleotide (FGAM) and glutamate. The FGAM synthase complex is composed of three subunits. PurQ produces an ammonia molecule by converting glutamine to glutamate. PurL transfers the ammonia molecule to FGAR to form FGAM in an ATP-dependent manner. PurS interacts with PurQ and PurL and is thought to assist in the transfer of the ammonia molecule from PurQ to PurL. The polypeptide is Phosphoribosylformylglycinamidine synthase subunit PurQ (Prochlorococcus marinus (strain NATL2A)).